The following is a 552-amino-acid chain: Putative transport protein PBPRA2144 (552 aa).

Transmembrane regions (helical) follow at residues 4–24, 26–46, 65–85, 95–115, and 158–178; these read IALS…IGNW, ICGV…VGHF, FGLI…FFAS, AFAA…YKIF, and MGYA…MWIL. RCK C-terminal domains follow at residues 188–276 and 279–361; these read KEAE…VIGE and DASL…IVGN. A run of 6 helical transmembrane segments spans residues 371-391, 394-414, 439-459, 464-484, 493-513, and 532-552; these read MLPV…PFYL, FPAA…LILA, IVLF…DTLV, LSWM…VGFL, YLTI…LAFA, and PLVM…LWAV.

Belongs to the AAE transporter (TC 2.A.81) family. YidE subfamily.

The protein localises to the cell membrane. The protein is Putative transport protein PBPRA2144 of Photobacterium profundum (strain SS9).